Here is a 219-residue protein sequence, read N- to C-terminus: Probable lipoprotein YiaD (219 aa).

An N-terminal signal peptide occupies residues 1 to 20 (MKKRVYLIAAVVSGALAVSG). A lipid anchor (N-palmitoyl cysteine) is attached at C21. C21 carries the S-diacylglycerol cysteine lipid modification. The next 2 membrane-spanning stretches (helical) occupy residues 37-55 (IGAG…LSSS) and 62-84 (GALI…MDVQ). Residues 103–219 (GDNIILNMPN…RRVEITLSPL (117 aa)) form the OmpA-like domain.

The protein localises to the cell inner membrane. Its subcellular location is the cell outer membrane. Functionally, suppresses temperature-sensitive mutations in BamB when overexpressed. This is Probable lipoprotein YiaD (yiaD) from Escherichia coli (strain K12).